A 176-amino-acid polypeptide reads, in one-letter code: NADH-quinone oxidoreductase subunit 10 (176 aa).

The next 5 membrane-spanning stretches (helical) occupy residues 2 to 22, 26 to 46, 56 to 76, 91 to 111, and 137 to 157; these read SLLE…VVTL, IHAA…YVAL, VIVY…LLFA, PLAA…LWGL, and FVLL…VALV.

This sequence belongs to the complex I subunit 6 family. As to quaternary structure, NDH-1 is composed of 15 different subunits, Nqo1 to Nqo15. The complex has a L-shaped structure, with the hydrophobic arm (subunits Nqo7, Nqo8 and Nqo10 to Nqo14) embedded in the membrane and the hydrophilic peripheral arm (subunits Nqo1 to Nqo6, Nqo9 and Nqo15) protruding into the bacterial cytoplasm. The hydrophilic domain contains all the redox centers.

Its subcellular location is the cell inner membrane. The enzyme catalyses a quinone + NADH + 5 H(+)(in) = a quinol + NAD(+) + 4 H(+)(out). Its function is as follows. NDH-1 shuttles electrons from NADH, via FMN and iron-sulfur (Fe-S) centers, to quinones in the respiratory chain. The immediate electron acceptor for the enzyme in this species is menaquinone. Couples the redox reaction to proton translocation (for every two electrons transferred, four hydrogen ions are translocated across the cytoplasmic membrane), and thus conserves the redox energy in a proton gradient required for the synthesis of ATP. The protein is NADH-quinone oxidoreductase subunit 10 (nqo10) of Thermus thermophilus (strain ATCC 27634 / DSM 579 / HB8).